We begin with the raw amino-acid sequence, 458 residues long: 3-isopropylmalate dehydratase large subunit (458 aa).

3 residues coordinate [4Fe-4S] cluster: C339, C399, and C402.

The protein belongs to the aconitase/IPM isomerase family. LeuC type 1 subfamily. Heterodimer of LeuC and LeuD. The cofactor is [4Fe-4S] cluster.

The enzyme catalyses (2R,3S)-3-isopropylmalate = (2S)-2-isopropylmalate. The protein operates within amino-acid biosynthesis; L-leucine biosynthesis; L-leucine from 3-methyl-2-oxobutanoate: step 2/4. In terms of biological role, catalyzes the isomerization between 2-isopropylmalate and 3-isopropylmalate, via the formation of 2-isopropylmaleate. The chain is 3-isopropylmalate dehydratase large subunit from Lactococcus lactis subsp. cremoris (strain SK11).